A 4485-amino-acid chain; its full sequence is Dynein gamma chain, flagellar outer arm (4485 aa).

The segment at 1–1780 (MALDNRHRLI…IISICDVDFE (1780 aa)) is stem. Coiled-coil stretches lie at residues 449 to 469 (IEGL…VKRK), 804 to 838 (VEQN…VRNY), 1093 to 1114 (VRNV…DNLI), 1275 to 1297 (DVVE…SKKL), and 1699 to 1727 (KKVD…NLET). AAA regions lie at residues 1781-2002 (YSFE…VLRT), 2061-2279 (KDAE…ISLK), 2384-2638 (TYPK…VFQG), and 2763-3013 (KFNE…YRRY). Residues 1819–1826 (GPAGTGKT), 2099–2106 (GPSGSGKS), 2425–2432 (GGPGTAKT), and 2802–2809 (GVGGSGKQ) each bind ATP. 4 coiled-coil regions span residues 3077-3099 (AKEA…KEKQ), 3196-3227 (EAQK…ELLE), 3265-3343 (KVVE…LAGE), and 3569-3663 (EDQL…EEYR). The interval 3077-3343 (AKEAEALLKQ…NALIGALAGE (267 aa)) is stalk. AAA stretches follow at residues 3412-3643 (LVDD…DVSE) and 3857-4071 (AADY…FLQN).

It belongs to the dynein heavy chain family. In terms of assembly, consists of at least 3 heavy chains (alpha, beta and gamma), 2 intermediate chains and 8 light chains.

It localises to the cell projection. Its subcellular location is the cilium. The protein resides in the flagellum. It is found in the cytoplasm. The protein localises to the cytoskeleton. It localises to the flagellum axoneme. In terms of biological role, force generating protein of eukaryotic cilia and flagella. Produces force towards the minus ends of microtubules. Dynein has ATPase activity; the force-producing power stroke is thought to occur on release of ADP. The protein is Dynein gamma chain, flagellar outer arm (ODA2) of Chlamydomonas reinhardtii (Chlamydomonas smithii).